The following is a 419-amino-acid chain: Carboxypeptidase A1 (419 aa).

The signal sequence occupies residues 1–16; the sequence is MRGLLVLSVLLGAVFG. Positions 17–110 are cleaved as a propeptide — activation peptide; that stretch reads KEDFVGHQVL…QEQMFAFRSR (94 aa). The Peptidase M14 domain occupies 121–414; that stretch reads TYHTLEEIYD…LALLTIMEHT (294 aa). H179 and E182 together coordinate Zn(2+). Residues 179 to 182, R237, and 254 to 255 each bind substrate; these read HSRE and NR. A disulfide bridge links C248 with C271. H306 contacts Zn(2+). Substrate-binding positions include 307–308 and Y358; that span reads SY. E380 acts as the Proton donor/acceptor in catalysis.

This sequence belongs to the peptidase M14 family. In terms of assembly, monomer. May form a complex with proelastase 2. Requires Zn(2+) as cofactor.

The protein localises to the secreted. It carries out the reaction Release of a C-terminal amino acid, but little or no action with -Asp, -Glu, -Arg, -Lys or -Pro.. The enzyme catalyses leukotriene C4 + H2O = leukotriene F4 + glycine. Inhibited by interaction with the S.magnifica carboxypeptidase inhibitor SmCI. Its function is as follows. Carboxypeptidase that catalyzes the release of a C-terminal amino acid, but has little or no action with -Asp, -Glu, -Arg, -Lys or -Pro. Catalyzes the conversion of leukotriene C4 to leukotriene F4 via the hydrolysis of an amide bond. This Homo sapiens (Human) protein is Carboxypeptidase A1.